The primary structure comprises 575 residues: Preterminal protein (575 aa).

The Nuclear localization signal motif lies at 309–318 (RLPRVTRRRR). Residues 314 to 340 (TRRRRRPPSPAPPPEEIEEAAMEVEEP) form a disordered region. Acidic residues predominate over residues 328–340 (EEIEEAAMEVEEP). Position 510 is an O-(5'-phospho-DNA)-serine (Ser-510).

Belongs to the adenoviridae terminal protein family. Heterodimer with the polymerase; this heterodimer binds to bp 9 to 18 of the genome. Interacts with host POU2F1; POU2F1 binds to the auxiliary sequences in the inverted terminal repeats and tethers the pTP-POL heterodimer to the origin DNA thereby participating in the assembly of the pre-initiation complex (POL-TP-DBP-NFIA-POU2F1). Preterminal protein is used to replicate viral genome, upon genomic encapsidation it is processed first into iTP and finally into TP by adenovirus protease.

Its subcellular location is the host nucleus matrix. In terms of biological role, protein covalently bound to the viral DNA that acts as a primer for viral genomic replication by DNA strand displacement. Assembles on the viral origin of replication in an initiation complex with viral polymerase, DBP, host NFIA and host POU2F1/OCT1. During initiation, the polymerase covalently couples the first dCTP with Ser-580 of pTP. The terminal protein stimulates the template activity over 20 fold compared to protein-free templates. Neo-synthesized viral genomes are linked to two preterminal proteins, one for each 5' end. These new genomes are encapsidated in the nucleus, and during capsid maturation by viral protease, preterminal protein is first cleaved into intermediary (iTP), then into mature TP. May play a role in host nuclear matrix localization of genomic DNA. The sequence is that of Preterminal protein from Fowl adenovirus A serotype 1 (strain CELO / Phelps) (FAdV-1).